An 822-amino-acid polypeptide reads, in one-letter code: DNA gyrase subunit A (822 aa).

Positions 32–497 (LPDVRDGLKP…QVLSLEDEDL (466 aa)) constitute a Topo IIA-type catalytic domain. The O-(5'-phospho-DNA)-tyrosine intermediate role is filled by Y120. A GyrA-box motif is present at residues 524 to 530 (QKRGGRG).

Belongs to the type II topoisomerase GyrA/ParC subunit family. In terms of assembly, heterotetramer, composed of two GyrA and two GyrB chains. In the heterotetramer, GyrA contains the active site tyrosine that forms a transient covalent intermediate with DNA, while GyrB binds cofactors and catalyzes ATP hydrolysis.

It localises to the cytoplasm. The enzyme catalyses ATP-dependent breakage, passage and rejoining of double-stranded DNA.. In terms of biological role, a type II topoisomerase that negatively supercoils closed circular double-stranded (ds) DNA in an ATP-dependent manner to modulate DNA topology and maintain chromosomes in an underwound state. Negative supercoiling favors strand separation, and DNA replication, transcription, recombination and repair, all of which involve strand separation. Also able to catalyze the interconversion of other topological isomers of dsDNA rings, including catenanes and knotted rings. Type II topoisomerases break and join 2 DNA strands simultaneously in an ATP-dependent manner. The protein is DNA gyrase subunit A of Streptococcus pneumoniae serotype 4 (strain ATCC BAA-334 / TIGR4).